Consider the following 664-residue polypeptide: Transketolase 1 (664 aa).

His-26 is a substrate binding site. Thiamine diphosphate-binding positions include His-66 and 114 to 116 (GPL). Mg(2+) is bound at residue Asp-155. Gly-156 and Asn-185 together coordinate thiamine diphosphate. Mg(2+)-binding residues include Asn-185 and Ile-187. His-260, Arg-357, and Ser-384 together coordinate substrate. His-260 contacts thiamine diphosphate. The Proton donor role is filled by Glu-411. Phe-437 contacts thiamine diphosphate. 3 residues coordinate substrate: His-461, Asp-469, and Arg-520.

This sequence belongs to the transketolase family. As to quaternary structure, homodimer. The cofactor is Mg(2+). Ca(2+) is required as a cofactor. It depends on Mn(2+) as a cofactor. Co(2+) serves as cofactor. Requires thiamine diphosphate as cofactor.

The enzyme catalyses D-sedoheptulose 7-phosphate + D-glyceraldehyde 3-phosphate = aldehydo-D-ribose 5-phosphate + D-xylulose 5-phosphate. Functionally, catalyzes the transfer of a two-carbon ketol group from a ketose donor to an aldose acceptor, via a covalent intermediate with the cofactor thiamine pyrophosphate. The sequence is that of Transketolase 1 (tkt1) from Vibrio parahaemolyticus serotype O3:K6 (strain RIMD 2210633).